Consider the following 152-residue polypeptide: Endoribonuclease YbeY (152 aa).

3 residues coordinate Zn(2+): histidine 116, histidine 120, and histidine 126.

This sequence belongs to the endoribonuclease YbeY family. Requires Zn(2+) as cofactor.

Its subcellular location is the cytoplasm. Single strand-specific metallo-endoribonuclease involved in late-stage 70S ribosome quality control and in maturation of the 3' terminus of the 16S rRNA. The sequence is that of Endoribonuclease YbeY from Mycoplasma mobile (strain ATCC 43663 / 163K / NCTC 11711) (Mesomycoplasma mobile).